Reading from the N-terminus, the 183-residue chain is Putative 3-methyladenine DNA glycosylase (183 aa).

This sequence belongs to the DNA glycosylase MPG family.

The protein is Putative 3-methyladenine DNA glycosylase of Legionella pneumophila subsp. pneumophila (strain Philadelphia 1 / ATCC 33152 / DSM 7513).